The following is a 449-amino-acid chain: Glucose-6-phosphate isomerase (449 aa).

The active-site Proton donor is E291. Active-site residues include H312 and K426.

The protein belongs to the GPI family.

It localises to the cytoplasm. It catalyses the reaction alpha-D-glucose 6-phosphate = beta-D-fructose 6-phosphate. Its pathway is carbohydrate biosynthesis; gluconeogenesis. It participates in carbohydrate degradation; glycolysis; D-glyceraldehyde 3-phosphate and glycerone phosphate from D-glucose: step 2/4. Its function is as follows. Catalyzes the reversible isomerization of glucose-6-phosphate to fructose-6-phosphate. The polypeptide is Glucose-6-phosphate isomerase (Streptococcus pyogenes serotype M2 (strain MGAS10270)).